A 243-amino-acid chain; its full sequence is Orotidine 5'-phosphate decarboxylase (243 aa).

Residues aspartate 12, lysine 34, 61–70 (DLKFHDIPNT), threonine 125, arginine 187, glutamine 196, glycine 216, and arginine 217 each bind substrate. The active-site Proton donor is the lysine 63.

The protein belongs to the OMP decarboxylase family. Type 1 subfamily. As to quaternary structure, homodimer.

The enzyme catalyses orotidine 5'-phosphate + H(+) = UMP + CO2. It participates in pyrimidine metabolism; UMP biosynthesis via de novo pathway; UMP from orotate: step 2/2. Catalyzes the decarboxylation of orotidine 5'-monophosphate (OMP) to uridine 5'-monophosphate (UMP). This Heliobacterium modesticaldum (strain ATCC 51547 / Ice1) protein is Orotidine 5'-phosphate decarboxylase.